The sequence spans 240 residues: uncharacterized protein (240 aa).

Residues Met-216–Ala-240 form a disordered region.

This is an uncharacterized protein from Escherichia coli (strain K12).